The chain runs to 358 residues: Methionine aminopeptidase 2 (358 aa).

Residue H109 participates in substrate binding. The a divalent metal cation site is built by D130, D141, and H210. A substrate-binding site is contributed by H218. A divalent metal cation contacts are provided by E243 and E339.

Belongs to the peptidase M24A family. Methionine aminopeptidase eukaryotic type 2 subfamily. Requires Co(2+) as cofactor. It depends on Zn(2+) as a cofactor. Mn(2+) is required as a cofactor. Fe(2+) serves as cofactor.

It localises to the cytoplasm. It catalyses the reaction Release of N-terminal amino acids, preferentially methionine, from peptides and arylamides.. Irreversibly inhibited by the fungal metabolite fumagillin and the fumagillin analog TNP470, antiangiogenic drugs. Functionally, cotranslationally removes the N-terminal methionine from nascent proteins. The N-terminal methionine is often cleaved when the second residue in the primary sequence is small and uncharged (Met-Ala-, Cys, Gly, Pro, Ser, Thr, or Val). The chain is Methionine aminopeptidase 2 from Encephalitozoon hellem (strain ATCC 50504) (Microsporidian parasite).